We begin with the raw amino-acid sequence, 262 residues long: Ribose-5-phosphate isomerase A (262 aa).

Residues 33-36 (TGST), 89-92 (DGAD), and 102-105 (KGGG) contribute to the substrate site. Glu-111 acts as the Proton acceptor in catalysis. Lys-129 is a binding site for substrate.

The protein belongs to the ribose 5-phosphate isomerase family. Homodimer.

The enzyme catalyses aldehydo-D-ribose 5-phosphate = D-ribulose 5-phosphate. The protein operates within carbohydrate degradation; pentose phosphate pathway; D-ribose 5-phosphate from D-ribulose 5-phosphate (non-oxidative stage): step 1/1. In terms of biological role, catalyzes the reversible conversion of ribose-5-phosphate to ribulose 5-phosphate. This Ruegeria sp. (strain TM1040) (Silicibacter sp.) protein is Ribose-5-phosphate isomerase A.